A 218-amino-acid chain; its full sequence is Recombination protein RecR (218 aa).

The segment at Cys56 to Cys71 adopts a C4-type zinc-finger fold. Residues Ser79 to Pro195 enclose the Toprim domain.

The protein belongs to the RecR family.

In terms of biological role, may play a role in DNA repair. It seems to be involved in an RecBC-independent recombinational process of DNA repair. It may act with RecF and RecO. The protein is Recombination protein RecR of Corynebacterium diphtheriae (strain ATCC 700971 / NCTC 13129 / Biotype gravis).